The primary structure comprises 547 residues: uncharacterized protein (547 aa).

12 consecutive transmembrane segments (helical) span residues 33–53, 107–127, 145–165, 203–223, 231–251, 263–283, 298–318, 351–371, 397–417, 432–452, 470–490, and 499–519; these read PTFF…IMVI, PLIV…GVIF, TGLI…LSFA, VYIL…FYLA, FIAI…FLLV, VAGI…LIYL, LNKI…ASFF, TLLT…FGLL, TVII…VAFG, LDLA…VATG, IVSL…FQAI, and VFIW…IAFG.

Its subcellular location is the cell membrane. This is an uncharacterized protein from Mycoplasma genitalium (strain ATCC 33530 / DSM 19775 / NCTC 10195 / G37) (Mycoplasmoides genitalium).